A 104-amino-acid polypeptide reads, in one-letter code: Large ribosomal subunit protein uL24 (104 aa).

Belongs to the universal ribosomal protein uL24 family. Part of the 50S ribosomal subunit.

One of two assembly initiator proteins, it binds directly to the 5'-end of the 23S rRNA, where it nucleates assembly of the 50S subunit. Its function is as follows. One of the proteins that surrounds the polypeptide exit tunnel on the outside of the subunit. In Pseudomonas fluorescens (strain Pf0-1), this protein is Large ribosomal subunit protein uL24.